Here is a 451-residue protein sequence, read N- to C-terminus: Jacalin-related lectin 35 (451 aa).

A2 carries the N-acetylalanine modification. 3 Jacalin-type lectin domains span residues A2–P143, L156–P297, and S306–P448.

The protein belongs to the jacalin lectin family. In terms of assembly, component of the PYK10 complex, at least composed of PYK10/BGLU23, BGLU21, BGLU22, JAL22, JAL23, PBP1/JAL30, PBP2/JAL31, JAL32, JAL33, JAL34, JAL35, GLL22 and GLL23.

The chain is Jacalin-related lectin 35 (JAL35) from Arabidopsis thaliana (Mouse-ear cress).